We begin with the raw amino-acid sequence, 526 residues long: Peptide chain release factor 3 (526 aa).

The tr-type G domain maps to Asn9–Gln277. GTP contacts are provided by residues Ser18 to Thr25, Asp86 to His90, and Asn140 to Asp143.

The protein belongs to the TRAFAC class translation factor GTPase superfamily. Classic translation factor GTPase family. PrfC subfamily.

Its subcellular location is the cytoplasm. Its function is as follows. Increases the formation of ribosomal termination complexes and stimulates activities of RF-1 and RF-2. It binds guanine nucleotides and has strong preference for UGA stop codons. It may interact directly with the ribosome. The stimulation of RF-1 and RF-2 is significantly reduced by GTP and GDP, but not by GMP. In Legionella pneumophila (strain Lens), this protein is Peptide chain release factor 3.